We begin with the raw amino-acid sequence, 356 residues long: MKHKPIDNELKYLDERSRDIFRHIVEAYLNDGEPVGSRNLSRLLQQTLSPATIRNVMSDLEHLGLIYAPHVSAGRMPTQSGLRFFVDAFMEAGDLPNEERENIEMQVKEAGHAQSVEHFLVQASRVLSDLSRGAGLVLATKQEGTLKHIEFVRLDREHALAVLVTQQGEVENRIVHLPEGVTHAQLTEATNFLNAHIQGRTLSEAKEEIACLCAETRAALDDLSHHLVETGLALLGGEGADHKIHLIVRGRSNLLEDVKAEEDLERLRHLFDDLETRESMAQLLDLTDEGSGVRIFIGSENKLFSLSGSSLVVAPYRDSQQRVIGALGVIGPTRLNYARIVPMVDYTAQLVSQLLR.

The protein belongs to the HrcA family.

Negative regulator of class I heat shock genes (grpE-dnaK-dnaJ and groELS operons). Prevents heat-shock induction of these operons. This is Heat-inducible transcription repressor HrcA from Bartonella tribocorum (strain CIP 105476 / IBS 506).